The primary structure comprises 360 residues: Peptide chain release factor 1 (360 aa).

Q235 carries the N5-methylglutamine modification. A compositionally biased stretch (basic and acidic residues) spans E283–A293. The disordered stretch occupies residues E283–D305.

The protein belongs to the prokaryotic/mitochondrial release factor family. In terms of processing, methylated by PrmC. Methylation increases the termination efficiency of RF1.

It localises to the cytoplasm. Peptide chain release factor 1 directs the termination of translation in response to the peptide chain termination codons UAG and UAA. This Ralstonia pickettii (strain 12J) protein is Peptide chain release factor 1.